A 168-amino-acid polypeptide reads, in one-letter code: Profilin-3 (168 aa).

A disordered region spans residues 14 to 36 (LSLEHSDKPQRRSRAKVKKKKKT). Over residues 24-36 (RRSRAKVKKKKKT) the composition is skewed to basic residues.

Belongs to the profilin family. As to quaternary structure, occurs in many kinds of cells as a complex with monomeric actin in a 1:1 ratio. Binding to the poly-proline motif of formins induces formation of oligomers through the N-terminal hydrophobic residues of PRF3. Expressed in roots, rosette leaves, cauline leaves, stems and flowers.

The protein localises to the cytoplasm. Its subcellular location is the cytoskeleton. Binds to actin monomers and regulates the organization of the actin cytoskeleton. Can increase the critical concentration (Cc) of actin assembly in vitro. Acts as a downstream effector of the hydrogen sulfide signaling to regulate the assembly and depolymerization of F-actin. At high concentrations, profilin prevents the polymerization of actin, whereas it enhances it at low concentrations. Binding to the poly-proline motif of formin induces oligomerization of PRF3. PRF3 oligomers inhibit formin-mediated actin assembly to modulate plant immunity triggered by pathogen-associated molecular patterns (PAMPs). In Arabidopsis thaliana (Mouse-ear cress), this protein is Profilin-3.